The sequence spans 814 residues: Tax1-binding protein 1 homolog (814 aa).

Phosphoserine occurs at positions 124, 138, and 225. A coiled-coil region spans residues Thr144 to Gln623. The interval Glu320 to Asp420 is oligomerization. The residue at position 619 (Ser619) is a Phosphoserine; by IKKA. Residue Ser632 is modified to Phosphoserine. Ser693 bears the Phosphoserine; by IKKA mark. The tract at residues Ser701 to Asn733 is disordered. 2 consecutive UBZ1-type zinc fingers follow at residues His752–His778 and Trp779–His805. The Zn(2+) site is built by Cys755, Cys758, His774, His778, Cys782, Cys785, His801, and His805.

Homooligomer. Interacts with TNFAIP3. Interacts with STARD13. Interacts with MYO6. Interacts with TOM1; the interaction is indirect and is mediated by MYO6, which acts as a bridge between TOM1 and TAX1BP1. Interacts with MAVS; this interaction induces MAVS polyubiquitination. Interacts with TNIP1. Interacts with TRAF6; this interaction mediates deubiquitination of TRAF6 and inhibition of NF-kappa-B activation. Interacts with RIPK1; this interaction negatively regulates RIPK1 ubiquitination. Interacts with NBR1. Interacts with TBK1. Interacts with RB1CC1. Interacts with SQSTM1. Interacts with AZI2. Interacts with TICAM1 and TRIM32; these interactions target TICAM1 to TAX1BP1-mediated selective autophagic degradation. In terms of processing, phosphorylated in the C-terminal region by CHUK/IKKA leading to NF-kappa-B signaling down-regulation.

Its subcellular location is the cytoplasm. The protein localises to the mitochondrion. It is found in the preautophagosomal structure. It localises to the cytoplasmic vesicle. The protein resides in the autophagosome. Functionally, ubiquitin-binding adapter that participates in inflammatory, antiviral and innate immune processes as well as selective autophagy regulation. Plays a key role in the negative regulation of NF-kappa-B and IRF3 signalings by acting as an adapter for the ubiquitin-editing enzyme A20/TNFAIP3 to bind and inactivate its substrates. Disrupts the interactions between the E3 ubiquitin ligase TRAF3 and TBK1/IKBKE to attenuate 'Lys63'-linked polyubiquitination of TBK1 and thereby IFN-beta production. Also recruits A20/TNFAIP3 to ubiquitinated signaling proteins TRAF6 and RIPK1, leading to their deubiquitination and disruption of IL-1 and TNF-induced NF-kappa-B signaling pathways. Inhibits virus-induced apoptosis by inducing the 'Lys-48'-linked polyubiquitination and degradation of MAVS via recruitment of the E3 ligase ITCH, thereby attenuating MAVS-mediated apoptosis signaling. As a macroautophagy/autophagy receptor, facilitates the xenophagic clearance of pathogenic bacteria such as Salmonella typhimurium and Mycobacterium tuberculosis. Upon NBR1 recruitment to the SQSTM1-ubiquitin condensates, acts as the major recruiter of RB1CC1 to these ubiquitin condensates to promote their autophagic degradation. Mediates the autophagic degradation of other substrates including TICAM1. This chain is Tax1-binding protein 1 homolog (Tax1bp1), found in Mus musculus (Mouse).